The following is a 713-amino-acid chain: Calpain-1 catalytic subunit (713 aa).

In terms of domain architecture, Calpain catalytic spans 55–354 (LFQDDAFPPV…FTKLEICNLT (300 aa)). Residues C115, H272, and N296 contribute to the active site. T354 carries the phosphothreonine modification. Residues 355 to 525 (PDALKSRTLR…KKAGTQELDD (171 aa)) are domain III. A linker region spans residues 526 to 541 (QIQANLPDEKVLSEEE). The domain IV stretch occupies residues 542 to 712 (IDDNFKTLFS…LFKWLQLTMF (171 aa)). EF-hand domains follow at residues 557–575 (DMEI…IISK), 584–609 (FSLE…LVEF), 614–649 (NRIR…AGFK), and 679–713 (VRLE…TMFA). Ca(2+) contacts are provided by D597, D599, N601, K603, E608, D627, D629, S631, S633, and E638.

This sequence belongs to the peptidase C2 family. In terms of assembly, forms a heterodimer with a small (regulatory) subunit CAPNS1. Ca(2+) is required as a cofactor. Undergoes calcium-induced successive autoproteolytic cleavages that generate a membrane-bound 78 kDa active form and an intracellular 75 kDa active form. Calpastatin reduces with high efficiency the transition from 78 kDa to 75 kDa calpain forms.

It localises to the cytoplasm. The protein localises to the cell membrane. The catalysed reaction is Broad endopeptidase specificity.. Its activity is regulated as follows. Activated by micromolar concentrations of calcium and inhibited by calpastatin. Calcium-regulated non-lysosomal thiol-protease which catalyzes limited proteolysis of substrates involved in cytoskeletal remodeling and signal transduction. Proteolytically cleaves CTBP1 at 'Asn-364', 'Gly-377' and 'His-399'. Cleaves and activates caspase-7 (CASP7). The polypeptide is Calpain-1 catalytic subunit (Rattus norvegicus (Rat)).